The sequence spans 847 residues: Endo-beta-N-acetylglucosaminidase EndoSd (847 aa).

The first 36 residues, methionine 1 to alanine 36, serve as a signal peptide directing secretion. Residues proline 65 to threonine 377 enclose the GH18 domain. An a glycoprotein-binding site is contributed by histidine 107. Glutamate 186 (proton donor) is an active-site residue. A glycoprotein contacts are provided by glutamate 188, glutamine 250, tyrosine 252, glutamate 288, glutamate 289, asparagine 295, and tyrosine 339. LRR repeat units follow at residues leucine 423–leucine 446, serine 447–glutamate 470, methionine 483–glycine 506, and leucine 507–lysine 530. Positions methionine 683–arginine 836 are carbohydrate-binding module (CBM). 3 residues coordinate Ca(2+): lysine 704, aspartate 707, and glutamate 829.

Belongs to the glycosyl hydrolase 18 family.

The protein resides in the secreted. It localises to the host extracellular space. The enzyme catalyses an N(4)-(oligosaccharide-(1-&gt;3)-[oligosaccharide-(1-&gt;6)]-beta-D-Man-(1-&gt;4)-beta-D-GlcNAc-(1-&gt;4)-alpha-D-GlcNAc)-L-asparaginyl-[protein] + H2O = an oligosaccharide-(1-&gt;3)-[oligosaccharide-(1-&gt;6)]-beta-D-Man-(1-&gt;4)-D-GlcNAc + N(4)-(N-acetyl-beta-D-glucosaminyl)-L-asparaginyl-[protein]. Functionally, endoglucosidase that acts as a host immune evasion factor by mediating hydrolysis of the N-linked glycan from the Fc region of host immunoglobulin-gamma (IgG) during infection. Specifically catalyzes the hydrolysis of the beta-1,4 linkage between the first two N-acetylglucosamine residues of the complex-type N-linked glycan located on 'Asn-297' of the Fc region of IgG antibodies (IGHG1, IGHG2, IGHG3 or IGHG4), thereby preventing interaction between IgGs and Fc receptors and ability to activate the complement pathway. Shows a specificity for biantennary complex type N-glycans; does neither cleave larger complex type glycans nor oligomannose and nor hybrid-type glycans. Specifically acts on IgGs; does not act on immunoglobulin alpha, beta, delta or mu. This chain is Endo-beta-N-acetylglucosaminidase EndoSd, found in Streptococcus dysgalactiae.